Here is a 148-residue protein sequence, read N- to C-terminus: UPF0178 protein DP1304 (148 aa).

The protein belongs to the UPF0178 family.

This is UPF0178 protein DP1304 from Desulfotalea psychrophila (strain LSv54 / DSM 12343).